A 365-amino-acid chain; its full sequence is Chorismate synthase (365 aa).

The NADP(+) site is built by Arg48 and Arg54. FMN is bound by residues Arg125–Ser127, Asn238–Ala239, Gly278, Lys293–Ser297, and Arg319.

The protein belongs to the chorismate synthase family. In terms of assembly, homotetramer. It depends on FMNH2 as a cofactor.

It catalyses the reaction 5-O-(1-carboxyvinyl)-3-phosphoshikimate = chorismate + phosphate. It participates in metabolic intermediate biosynthesis; chorismate biosynthesis; chorismate from D-erythrose 4-phosphate and phosphoenolpyruvate: step 7/7. In terms of biological role, catalyzes the anti-1,4-elimination of the C-3 phosphate and the C-6 proR hydrogen from 5-enolpyruvylshikimate-3-phosphate (EPSP) to yield chorismate, which is the branch point compound that serves as the starting substrate for the three terminal pathways of aromatic amino acid biosynthesis. This reaction introduces a second double bond into the aromatic ring system. This Vesicomyosocius okutanii subsp. Calyptogena okutanii (strain HA) protein is Chorismate synthase.